Consider the following 652-residue polypeptide: ATP-binding cassette sub-family G member 5 (652 aa).

The tract at residues methionine 1–leucine 25 is disordered. At methionine 1–lysine 384 the chain is on the cytoplasmic side. One can recognise an ABC transporter domain in the interval leucine 39–glutamate 294. A lipid anchor (S-palmitoyl cysteine) is attached at cysteine 61. Glycine 87 to threonine 94 lines the ATP pocket. Residues glutamine 385–leucine 405 form a helical membrane-spanning segment. Positions methionine 389 to arginine 646 constitute an ABC transmembrane type-2 domain. At leucine 406–glycine 422 the chain is on the extracellular side. N-linked (GlcNAc...) asparagine glycosylation occurs at asparagine 410. Residues leucine 423 to phenylalanine 443 form a helical membrane-spanning segment. Topologically, residues proline 444–tyrosine 468 are cytoplasmic. A helical transmembrane segment spans residues valine 469 to threonine 490. Residues leucine 491–glycine 501 lie on the Extracellular side of the membrane. The helical transmembrane segment at tyrosine 502 to leucine 522 threads the bilayer. The Cytoplasmic portion of the chain corresponds to glycine 523–asparagine 529. A helical transmembrane segment spans residues isoleucine 530–isoleucine 550. Topologically, residues arginine 551–asparagine 624 are extracellular. 2 N-linked (GlcNAc...) asparagine glycosylation sites follow: asparagine 585 and asparagine 592. The helical transmembrane segment at phenylalanine 625–valine 645 threads the bilayer. Residues arginine 646 to arginine 652 are Cytoplasmic-facing.

It belongs to the ABC transporter superfamily. ABCG family. Eye pigment precursor importer (TC 3.A.1.204) subfamily. As to quaternary structure, heterodimer with ABCG8. Requires Mg(2+) as cofactor. N-glycosylated. N-glycosylation is important for efficient export out of the endoplasmic reticulum. Detected in liver and jejunum. Detected on enterocyte villi (at protein level). Expressed in jejunum, ileum and, at lower level, in the liver.

It localises to the cell membrane. It is found in the apical cell membrane. It catalyses the reaction cholesterol(in) + ATP + H2O = cholesterol(out) + ADP + phosphate + H(+). The catalysed reaction is sitosterol(in) + ATP + H2O = sitosterol(out) + ADP + phosphate + H(+). Its activity is regulated as follows. Cholesterol transport is inhibited by vanadate and by beryllium fluoride. In terms of biological role, ABCG5 and ABCG8 form an obligate heterodimer that mediates Mg(2+)- and ATP-dependent sterol transport across the cell membrane. Plays an essential role in the selective transport of dietary plant sterols and cholesterol in and out of the enterocytes and in the selective sterol excretion by the liver into bile. Required for normal sterol homeostasis. The heterodimer with ABCG8 has ATPase activity. The sequence is that of ATP-binding cassette sub-family G member 5 from Mus musculus (Mouse).